The primary structure comprises 230 residues: Ribonuclease 3 (230 aa).

Residues 1-134 (MKQLEELLST…FLGALLLDKG (134 aa)) enclose the RNase III domain. Glutamate 47 contacts Mg(2+). The active site involves aspartate 51. 2 residues coordinate Mg(2+): aspartate 120 and glutamate 123. The active site involves glutamate 123. One can recognise a DRBM domain in the interval 160 to 229 (DYKTCLQEFL…AKNALAQLSE (70 aa)).

The protein belongs to the ribonuclease III family. As to quaternary structure, homodimer. Mg(2+) is required as a cofactor.

It localises to the cytoplasm. It catalyses the reaction Endonucleolytic cleavage to 5'-phosphomonoester.. Functionally, digests double-stranded RNA. Involved in the processing of primary rRNA transcript to yield the immediate precursors to the large and small rRNAs (23S and 16S). Processes some mRNAs, and tRNAs when they are encoded in the rRNA operon. Processes pre-crRNA and tracrRNA of type II CRISPR loci if present in the organism. This Streptococcus pyogenes serotype M2 (strain MGAS10270) protein is Ribonuclease 3.